The chain runs to 217 residues: Pyridoxine/pyridoxamine 5'-phosphate oxidase (217 aa).

Residues 13-16 and K71 each bind substrate; that span reads RREY. FMN contacts are provided by residues 66–71, 81–82, R87, K88, and Q110; these read RIVLLK and YT. Residues Y128, R132, and S136 each contribute to the substrate site. FMN is bound by residues 145 to 146 and W190; that span reads QS. Position 196-198 (196-198) interacts with substrate; it reads RLH. Residue R200 participates in FMN binding.

Belongs to the pyridoxamine 5'-phosphate oxidase family. In terms of assembly, homodimer. The cofactor is FMN.

The enzyme catalyses pyridoxamine 5'-phosphate + O2 + H2O = pyridoxal 5'-phosphate + H2O2 + NH4(+). It catalyses the reaction pyridoxine 5'-phosphate + O2 = pyridoxal 5'-phosphate + H2O2. Its pathway is cofactor metabolism; pyridoxal 5'-phosphate salvage; pyridoxal 5'-phosphate from pyridoxamine 5'-phosphate: step 1/1. The protein operates within cofactor metabolism; pyridoxal 5'-phosphate salvage; pyridoxal 5'-phosphate from pyridoxine 5'-phosphate: step 1/1. Its function is as follows. Catalyzes the oxidation of either pyridoxine 5'-phosphate (PNP) or pyridoxamine 5'-phosphate (PMP) into pyridoxal 5'-phosphate (PLP). The protein is Pyridoxine/pyridoxamine 5'-phosphate oxidase of Yersinia enterocolitica serotype O:8 / biotype 1B (strain NCTC 13174 / 8081).